A 153-amino-acid chain; its full sequence is Endoribonuclease YbeY (153 aa).

Residues H115, H119, and H125 each contribute to the Zn(2+) site.

It belongs to the endoribonuclease YbeY family. Zn(2+) serves as cofactor.

It localises to the cytoplasm. In terms of biological role, single strand-specific metallo-endoribonuclease involved in late-stage 70S ribosome quality control and in maturation of the 3' terminus of the 16S rRNA. This chain is Endoribonuclease YbeY, found in Blochmanniella floridana.